The primary structure comprises 468 residues: ATP synthase subunit beta (468 aa).

148–155 provides a ligand contact to ATP; that stretch reads GGAGVGKT.

Belongs to the ATPase alpha/beta chains family. In terms of assembly, F-type ATPases have 2 components, CF(1) - the catalytic core - and CF(0) - the membrane proton channel. CF(1) has five subunits: alpha(3), beta(3), gamma(1), delta(1), epsilon(1). CF(0) has three main subunits: a(1), b(2) and c(9-12). The alpha and beta chains form an alternating ring which encloses part of the gamma chain. CF(1) is attached to CF(0) by a central stalk formed by the gamma and epsilon chains, while a peripheral stalk is formed by the delta and b chains.

Its subcellular location is the cell inner membrane. The enzyme catalyses ATP + H2O + 4 H(+)(in) = ADP + phosphate + 5 H(+)(out). Its function is as follows. Produces ATP from ADP in the presence of a proton gradient across the membrane. The catalytic sites are hosted primarily by the beta subunits. The protein is ATP synthase subunit beta of Xanthomonas campestris pv. campestris (strain B100).